An 876-amino-acid chain; its full sequence is Alanine--tRNA ligase (876 aa).

The segment at 2–461 is catalytic; that stretch reads SKSTAEIRQA…VDSASEFKGY (460 aa). Lys-74 is subject to N6-acetyllysine. The tract at residues 553-705 is editing; that stretch reads DEARRARIRL…EAVTGEGAIA (153 aa). The Zn(2+) site is built by His-564, His-568, Cys-666, and His-670. The important for oligomerization stretch occupies residues 699 to 808; that stretch reads TGEGAIATVH…STIIVLATVV (110 aa). A C-Ala domain region spans residues 766-875; the sequence is IDVNGVKLLV…SVKGWVSAKL (110 aa).

Belongs to the class-II aminoacyl-tRNA synthetase family. As to quaternary structure, homotetramer. The cofactor is Zn(2+).

The protein resides in the cytoplasm. The catalysed reaction is tRNA(Ala) + L-alanine + ATP = L-alanyl-tRNA(Ala) + AMP + diphosphate. It carries out the reaction (S)-lactate + ATP + H(+) = (S)-lactoyl-AMP + diphosphate. The enzyme catalyses (S)-lactoyl-AMP + L-lysyl-[protein] = N(6)-[(S)-lactoyl]-L-lysyl-[protein] + AMP + 2 H(+). Acetylation at Lys-74 decreases the alanylation activity for tRNA(Ala); a protein that is fully acetylated is inactive in vitro. In terms of biological role, catalyzes the attachment of L-alanine to tRNA(Ala) in a two-step reaction: L-alanine is first activated by ATP to form Ala-AMP and then transferred to the acceptor end of tRNA(Ala). AlaRS also incorrectly activates the sterically smaller amino acid glycine as well as the sterically larger amino acid L-serine; generates 2-fold more mischarged Gly than Ser. These mischarged amino acids occur because the of inherent physicochemical limitations on discrimination between closely related amino acids (Ala, Gly and Ser) in the charging step. In presence of high levels of lactate, also acts as a protein lactyltransferase that mediates lactylation of lysine residues in target proteins. Edits mischarged Ser-tRNA(Ala) and Gly-tRNA(Ala) but not incorrectly charged Ser-tRNA(Thr). Dtd edits Gly-tRNA(Ala) 4-fold better than does AlaRS. Functionally, attaches Ala to transfer-messenger RNA (tmRNA, also known as 10Sa RNA, the product of the ssrA gene). tmRNA plays a major role in rescue of stalled ribosomes via trans-translation. The sequence is that of Alanine--tRNA ligase (alaS) from Escherichia coli (strain K12).